A 304-amino-acid chain; its full sequence is Acetaldehyde dehydrogenase 4 (304 aa).

Catalysis depends on Cys131, which acts as the Acyl-thioester intermediate. Residues 162–170 (SAGPGTRKN) and Asn273 contribute to the NAD(+) site.

It belongs to the acetaldehyde dehydrogenase family. Heterotetramer composed of two BphI (aldolase) and two BphJ (dehydrogenase).

The enzyme catalyses acetaldehyde + NAD(+) + CoA = acetyl-CoA + NADH + H(+). It carries out the reaction propanal + NAD(+) + CoA = propanoyl-CoA + NADH + H(+). It functions in the pathway xenobiotic degradation; polychlorinated biphenyl degradation. With respect to regulation, bound pyruvate or other intermediates in the aldol addition reaction catalyzed by BphI allosterically activates BphJ reductive deacylation activity. Its function is as follows. Catalyzes the conversion of acetaldehyde or propanal to acetyl-CoA or propanoyl-CoA, respectively, using NAD(+) and coenzyme A. Displays broad specificity since it can utilize aliphatic aldehydes from two to five carbons in length as substrates; the aldehyde substrates can be directly channeled from the aldolase BphI to the dehydrogenase BphJ. Is the final enzyme in the meta-cleavage pathway for the degradation of polychlorinated biphenyls (PCBs). Is also able to utilize NADP(+) instead of NAD(+). Is not active with succinic semialdehyde or picolinaldehyde as substrates. Can also catalyze the reverse reaction, i.e. the reductive deacylation of acetyl-CoA to acetaldehyde, which is then channeled to the BphI active site. The BphI-BphJ enzyme complex exhibits unique bidirectionality in substrate channeling and allosteric activation. This is Acetaldehyde dehydrogenase 4 (bphJ) from Paraburkholderia xenovorans (strain LB400).